The primary structure comprises 391 residues: Histamine H4 receptor (391 aa).

The Extracellular portion of the chain corresponds to 1–19 (MSESNSTGILPPAAQVPLA). Asn-5 is a glycosylation site (N-linked (GlcNAc...) asparagine). A helical transmembrane segment spans residues 20-40 (FLMSSFAFAIMVGNAVVILAF). The Cytoplasmic segment spans residues 41–52 (VVDRNLRHRSNY). The helical transmembrane segment at 53-73 (FFLNLAISDFLVGLISIPLYI) threads the bilayer. Residues 74–87 (PHVLFNWNFGSGIC) lie on the Extracellular side of the membrane. The cysteines at positions 87 and 166 are disulfide-linked. Residues 88–108 (MFWLITDYLLCTASVYNIVLI) traverse the membrane as a helical segment. Topologically, residues 109-131 (SYDRYQSVSNAVSYRAQHTGIMK) are cytoplasmic. Residues 132–152 (IVAQMVAVWILAFLVNGPMIL) traverse the membrane as a helical segment. Topologically, residues 153-174 (ASDSWKNSTNTKDCEPGFVTEW) are extracellular. Asn-159 carries an N-linked (GlcNAc...) asparagine glycan. A helical membrane pass occupies residues 175–195 (YILTITMLLEFLLPVISVAYF). The Cytoplasmic segment spans residues 196 to 306 (NVQIYWSLWK…LLRGRKLARS (111 aa)). The disordered stretch occupies residues 238 to 258 (TSNPGLKESAASRHSESPRRK). Over residues 247–256 (AASRHSESPR) the composition is skewed to basic and acidic residues. The chain crosses the membrane as a helical span at residues 307–327 (LAILLSAFAICWAPYCLFTIV). Residues 328–343 (LSTYPRTERPKSVWYS) lie on the Extracellular side of the membrane. The chain crosses the membrane as a helical span at residues 344-364 (IAFWLQWFNSFVNPFLYPLCH). The Cytoplasmic segment spans residues 365 to 391 (RRFQKAFWKILCVTKQPALSQNQSVSS).

This sequence belongs to the G-protein coupled receptor 1 family. Interacts with TSPAN4.

It is found in the cell membrane. Functionally, the H4 subclass of histamine receptors could mediate the histamine signals in peripheral tissues. Displays a significant level of constitutive activity (spontaneous activity in the absence of agonist). This is Histamine H4 receptor (Hrh4) from Mus musculus (Mouse).